The sequence spans 327 residues: Quinone oxidoreductase (327 aa).

Belongs to the zinc-containing alcohol dehydrogenase family. Quinone oxidoreductase subfamily. In terms of assembly, homodimer.

It carries out the reaction 2 a quinone + NADPH + H(+) = 2 a 1,4-benzosemiquinone + NADP(+). This is Quinone oxidoreductase (qor) from Salmonella typhimurium (strain LT2 / SGSC1412 / ATCC 700720).